The following is a 534-amino-acid chain: Peptide chain release factor 3 (534 aa).

In terms of domain architecture, tr-type G spans 9–278 (ARRRTFAIIS…FFVEHAPSPQ (270 aa)). GTP contacts are provided by residues 18–25 (SHPDAGKT), 86–90 (DTPGH), and 140–143 (NKLD).

It belongs to the TRAFAC class translation factor GTPase superfamily. Classic translation factor GTPase family. PrfC subfamily.

It is found in the cytoplasm. In terms of biological role, increases the formation of ribosomal termination complexes and stimulates activities of RF-1 and RF-2. It binds guanine nucleotides and has strong preference for UGA stop codons. It may interact directly with the ribosome. The stimulation of RF-1 and RF-2 is significantly reduced by GTP and GDP, but not by GMP. This Xylella fastidiosa (strain M12) protein is Peptide chain release factor 3.